The following is a 200-amino-acid chain: Pyridoxine/pyridoxamine 5'-phosphate oxidase (200 aa).

FMN is bound by residues 48–53 (RMVLLK), 63–64 (YT), Lys-70, and Gln-92. Lys-53 contacts substrate. Residues Tyr-110, Arg-114, and Ser-118 each contribute to the substrate site. FMN is bound by residues 127-128 (QS) and Trp-171. 177-179 (RLH) contacts substrate. An FMN-binding site is contributed by Arg-181.

This sequence belongs to the pyridoxamine 5'-phosphate oxidase family. In terms of assembly, homodimer. FMN serves as cofactor.

It carries out the reaction pyridoxamine 5'-phosphate + O2 + H2O = pyridoxal 5'-phosphate + H2O2 + NH4(+). The catalysed reaction is pyridoxine 5'-phosphate + O2 = pyridoxal 5'-phosphate + H2O2. Its pathway is cofactor metabolism; pyridoxal 5'-phosphate salvage; pyridoxal 5'-phosphate from pyridoxamine 5'-phosphate: step 1/1. It functions in the pathway cofactor metabolism; pyridoxal 5'-phosphate salvage; pyridoxal 5'-phosphate from pyridoxine 5'-phosphate: step 1/1. Its function is as follows. Catalyzes the oxidation of either pyridoxine 5'-phosphate (PNP) or pyridoxamine 5'-phosphate (PMP) into pyridoxal 5'-phosphate (PLP). The chain is Pyridoxine/pyridoxamine 5'-phosphate oxidase from Cereibacter sphaeroides (strain ATCC 17023 / DSM 158 / JCM 6121 / CCUG 31486 / LMG 2827 / NBRC 12203 / NCIMB 8253 / ATH 2.4.1.) (Rhodobacter sphaeroides).